The sequence spans 182 residues: Transcription termination/antitermination protein NusG (182 aa).

One can recognise a KOW domain in the interval 131–163 (VGEQVRIKSGPFANQVGEVQEIEADKFKLTVLV).

The protein belongs to the NusG family.

Functionally, participates in transcription elongation, termination and antitermination. In Staphylococcus carnosus (strain TM300), this protein is Transcription termination/antitermination protein NusG.